We begin with the raw amino-acid sequence, 42 residues long: Cytochrome b559 subunit beta (42 aa).

The chain crosses the membrane as a helical span at residues 17 to 33; it reads WLAIHAIGIPAVFFIGS. H21 contacts heme.

Belongs to the PsbE/PsbF family. In terms of assembly, heterodimer of an alpha subunit and a beta subunit. PSII is composed of 1 copy each of membrane proteins PsbA, PsbB, PsbC, PsbD, PsbE, PsbF, PsbH, PsbI, PsbJ, PsbK, PsbL, PsbM, PsbT, PsbX, PsbY, PsbZ, Psb30/Ycf12, at least 3 peripheral proteins of the oxygen-evolving complex and a large number of cofactors. It forms dimeric complexes. It depends on heme b as a cofactor.

Its subcellular location is the plastid. It localises to the cyanelle thylakoid membrane. This b-type cytochrome is tightly associated with the reaction center of photosystem II (PSII). PSII is a light-driven water:plastoquinone oxidoreductase that uses light energy to abstract electrons from H(2)O, generating O(2) and a proton gradient subsequently used for ATP formation. It consists of a core antenna complex that captures photons, and an electron transfer chain that converts photonic excitation into a charge separation. The chain is Cytochrome b559 subunit beta from Cyanophora paradoxa.